We begin with the raw amino-acid sequence, 282 residues long: Probable endonuclease 4 (282 aa).

His66, His106, Glu143, Asp177, His180, His214, Asp227, His229, and Glu259 together coordinate Zn(2+).

It belongs to the AP endonuclease 2 family. It depends on Zn(2+) as a cofactor.

It catalyses the reaction Endonucleolytic cleavage to 5'-phosphooligonucleotide end-products.. Its function is as follows. Endonuclease IV plays a role in DNA repair. It cleaves phosphodiester bonds at apurinic or apyrimidinic (AP) sites, generating a 3'-hydroxyl group and a 5'-terminal sugar phosphate. The chain is Probable endonuclease 4 from Nitratidesulfovibrio vulgaris (strain ATCC 29579 / DSM 644 / CCUG 34227 / NCIMB 8303 / VKM B-1760 / Hildenborough) (Desulfovibrio vulgaris).